The chain runs to 513 residues: ATP synthase subunit alpha 1 (513 aa).

An ATP-binding site is contributed by 169–176 (GDRQTGKT).

It belongs to the ATPase alpha/beta chains family. As to quaternary structure, F-type ATPases have 2 components, CF(1) - the catalytic core - and CF(0) - the membrane proton channel. CF(1) has five subunits: alpha(3), beta(3), gamma(1), delta(1), epsilon(1). CF(0) has three main subunits: a(1), b(2) and c(9-12). The alpha and beta chains form an alternating ring which encloses part of the gamma chain. CF(1) is attached to CF(0) by a central stalk formed by the gamma and epsilon chains, while a peripheral stalk is formed by the delta and b chains.

Its subcellular location is the cell inner membrane. It carries out the reaction ATP + H2O + 4 H(+)(in) = ADP + phosphate + 5 H(+)(out). In terms of biological role, produces ATP from ADP in the presence of a proton gradient across the membrane. The alpha chain is a regulatory subunit. The polypeptide is ATP synthase subunit alpha 1 (Photobacterium profundum (strain SS9)).